Here is a 356-residue protein sequence, read N- to C-terminus: MAKENVCIVYGGKSAEHDVSILTAQNVLNAIDKEQYQIDIIYITNDGAWKKKENIVDTINDIDSLRLIDVEAGEISKLLSQGSTGNAYSAVFPLLHGPNGEDGTIQGLFEVLDIPYVGNGVLAASSSMDKLVMKQLFAHRGLPQLPYVSFLRSEYHKYEGNILKLVHDKLEYPVFVKPANLGSSVGISKCNNEEELKNGIEEAFQFDRKLVIEQGIEAREIEVAVLGNDYPETTWPGEVIKEVAFYDYKAKYKDGKIKLDIPADLDEEVQMTLRNMAVEAFKATDCAGLLRADFFVTDDNQIFINETNAMPGFTAFSMYPSLWENMGVSYSDLIKKLIELAKEKHEDKKQNKYKID.

Residues Lys134 to Glu339 form the ATP-grasp domain. His167–Glu222 is an ATP binding site. The Mg(2+) site is built by Asp293, Glu306, and Asn308.

The protein belongs to the D-alanine--D-alanine ligase family. It depends on Mg(2+) as a cofactor. Mn(2+) is required as a cofactor.

The protein localises to the cytoplasm. It catalyses the reaction 2 D-alanine + ATP = D-alanyl-D-alanine + ADP + phosphate + H(+). Its pathway is cell wall biogenesis; peptidoglycan biosynthesis. Functionally, cell wall formation. The chain is D-alanine--D-alanine ligase from Staphylococcus saprophyticus subsp. saprophyticus (strain ATCC 15305 / DSM 20229 / NCIMB 8711 / NCTC 7292 / S-41).